The following is a 350-amino-acid chain: Protein RecA (350 aa).

Residue 66-73 (GPESSGKT) participates in ATP binding.

Belongs to the RecA family.

It localises to the cytoplasm. In terms of biological role, can catalyze the hydrolysis of ATP in the presence of single-stranded DNA, the ATP-dependent uptake of single-stranded DNA by duplex DNA, and the ATP-dependent hybridization of homologous single-stranded DNAs. It interacts with LexA causing its activation and leading to its autocatalytic cleavage. The polypeptide is Protein RecA (Dichelobacter nodosus (strain VCS1703A)).